The following is a 96-amino-acid chain: Putative pterin-4-alpha-carbinolamine dehydratase (96 aa).

It belongs to the pterin-4-alpha-carbinolamine dehydratase family.

It catalyses the reaction (4aS,6R)-4a-hydroxy-L-erythro-5,6,7,8-tetrahydrobiopterin = (6R)-L-erythro-6,7-dihydrobiopterin + H2O. This Caulobacter sp. (strain K31) protein is Putative pterin-4-alpha-carbinolamine dehydratase.